The primary structure comprises 690 residues: DNA ligase (690 aa).

NAD(+) is bound by residues 36-40 (DSVYD), 85-86 (SL), and E124. Residue K126 is the N6-AMP-lysine intermediate of the active site. NAD(+)-binding residues include R147, E184, K308, and K332. Zn(2+) contacts are provided by C426, C429, C444, and C449. The region spanning 614-690 (NQSNVFDGKS…INENELKLLL (77 aa)) is the BRCT domain.

It belongs to the NAD-dependent DNA ligase family. LigA subfamily. It depends on Mg(2+) as a cofactor. Requires Mn(2+) as cofactor.

It carries out the reaction NAD(+) + (deoxyribonucleotide)n-3'-hydroxyl + 5'-phospho-(deoxyribonucleotide)m = (deoxyribonucleotide)n+m + AMP + beta-nicotinamide D-nucleotide.. In terms of biological role, DNA ligase that catalyzes the formation of phosphodiester linkages between 5'-phosphoryl and 3'-hydroxyl groups in double-stranded DNA using NAD as a coenzyme and as the energy source for the reaction. It is essential for DNA replication and repair of damaged DNA. This Prochlorococcus marinus (strain NATL2A) protein is DNA ligase.